Consider the following 176-residue polypeptide: KxDL motif-containing protein 1 (176 aa).

Position 1 is an N-acetylmethionine (Met1). A disordered region spans residues 95–176; that stretch reads HPEAFSHIPE…HTDDEEMPGE (82 aa). A compositionally biased stretch (low complexity) spans 119-131; sequence STTTTIATSEQST. Polar residues predominate over residues 132–145; that stretch reads GSCDTSPDTVSPSL.

It belongs to the KXD1 family. As to quaternary structure, component of the BLOC-one-related complex (BORC) which is composed of BLOC1S1, BLOC1S2, BORCS5, BORCS6, BORCS7, BORCS8, KXD1 and SNAPIN. Associates with the BLOC-1 complex. Interacts with BLOC1S1. Interacts with DTNBP1/BLOC1S7 (via coiled-coil domain).

Its subcellular location is the lysosome membrane. Functionally, as part of the BORC complex may play a role in lysosomes movement and localization at the cell periphery. Associated with the cytosolic face of lysosomes, the BORC complex may recruit ARL8B and couple lysosomes to microtubule plus-end-directed kinesin motor. May also be involved in the biogenesis of lysosome-related organelles such as melanosomes. The protein is KxDL motif-containing protein 1 (KXD1) of Bos taurus (Bovine).